Reading from the N-terminus, the 79-residue chain is DNA-directed RNA polymerase subunit omega (79 aa).

The protein belongs to the RNA polymerase subunit omega family. As to quaternary structure, the RNAP catalytic core consists of 2 alpha, 1 beta, 1 beta' and 1 omega subunit. When a sigma factor is associated with the core the holoenzyme is formed, which can initiate transcription.

It carries out the reaction RNA(n) + a ribonucleoside 5'-triphosphate = RNA(n+1) + diphosphate. In terms of biological role, promotes RNA polymerase assembly. Latches the N- and C-terminal regions of the beta' subunit thereby facilitating its interaction with the beta and alpha subunits. The polypeptide is DNA-directed RNA polymerase subunit omega (Bdellovibrio bacteriovorus (strain ATCC 15356 / DSM 50701 / NCIMB 9529 / HD100)).